The sequence spans 720 residues: Catalase-peroxidase (720 aa).

The segment at residues 82-207 (WHSAGTYRTF…LGNTVMGLIY (126 aa)) is a cross-link (tryptophyl-tyrosyl-methioninium (Trp-Tyr) (with M-233)). The active-site Proton acceptor is the His83. Residues 207-233 (YVNPEGPNGEPDLEGSAKNIRESFGKM) constitute a cross-link (tryptophyl-tyrosyl-methioninium (Tyr-Met) (with W-82)). Residue His248 coordinates heme b.

It belongs to the peroxidase family. Peroxidase/catalase subfamily. As to quaternary structure, homodimer or homotetramer. It depends on heme b as a cofactor. Formation of the three residue Trp-Tyr-Met cross-link is important for the catalase, but not the peroxidase activity of the enzyme.

The catalysed reaction is H2O2 + AH2 = A + 2 H2O. The enzyme catalyses 2 H2O2 = O2 + 2 H2O. In terms of biological role, bifunctional enzyme with both catalase and broad-spectrum peroxidase activity. This chain is Catalase-peroxidase, found in Halobacterium salinarum (strain ATCC 29341 / DSM 671 / R1).